Consider the following 114-residue polypeptide: NADH-ubiquinone oxidoreductase chain 3 (114 aa).

Helical transmembrane passes span 3-23 (ATILMIAMTLSTILAILSFWL), 54-74 (FFLIAILFLLFDLEIALLLPF), and 85-105 (IVILWAALILTLLTLGLIYEW).

This sequence belongs to the complex I subunit 3 family.

The protein resides in the mitochondrion membrane. It catalyses the reaction a ubiquinone + NADH + 5 H(+)(in) = a ubiquinol + NAD(+) + 4 H(+)(out). Its function is as follows. Core subunit of the mitochondrial membrane respiratory chain NADH dehydrogenase (Complex I) that is believed to belong to the minimal assembly required for catalysis. Complex I functions in the transfer of electrons from NADH to the respiratory chain. The immediate electron acceptor for the enzyme is believed to be ubiquinone. The protein is NADH-ubiquinone oxidoreductase chain 3 (mt-nd3) of Xenopus laevis (African clawed frog).